The following is a 217-amino-acid chain: ATP synthase subunit 4, mitochondrial (217 aa).

Residues 1–14 (MPFARVGALSARHY) constitute a mitochondrion transit peptide. The next 2 membrane-spanning stretches (helical) occupy residues 41-61 (GVLATGVLGSIYAISNELYIV) and 66-86 (IVLGVFAAFVVVVAKLGGPGY).

F-type ATP synthases have 2 components, the catalytic core F(1) and the membrane-embedded component F(0), linked together by a central stalk and a peripheral stalk. The central stalk, also called rotor shaft, is often seen as part of F(1). The peripheral stalk is seen as part of F(0). F(0) contains the membrane channel next to the rotor. F-type ATP synthases form dimers but each monomer functions independently in ATP generation. The dimer consists of 17 different polypeptides: ATP1 (subunit alpha, 3 molecules per monomer, part of F(1)), ATP2 (subunit beta, 3 copies per monomer, part of F(1)), ATP3 (subunit gamma, part of the central stalk), ATP4 (subunit b, part of the peripheral stalk), ATP5/OSCP (subunit 5/OSCP, part of the peripheral stalk), ATP6 (subunit a, part of the peripheral stalk), ATP7 (subunit d, part of the peripheral stalk), ATP8 (subunit 8, part of the peripheral stalk), OLI1 (subunit c, part of the rotor, 10 molecules per monomer), ATP14 (subunit h, part of the peripheral stalk), ATP15 (subunit epsilon, part of the central stalk), ATP16 (subunit delta, part of the central stalk), ATP17 (subunit f, part of the peripheral stalk), ATP18 (subunit i/j, part of the peripheral stalk), ATP19 (subunit k, dimer-specific, at interface between monomers), ATP20 (subunit g, at interface between monomers), TIM11 (subunit e, at interface between monomers).

The protein localises to the mitochondrion inner membrane. In terms of biological role, mitochondrial membrane ATP synthase (F(1)F(0) ATP synthase or Complex V) produces ATP from ADP in the presence of a proton gradient across the membrane which is generated by electron transport complexes of the respiratory chain. F-type ATP synthases consist of two structural domains, F(1) - containing the extramembraneous catalytic core, and F(0) - containing the membrane proton channel, linked together by a central stalk and a peripheral stalk. During catalysis, ATP synthesis in the catalytic domain of F(1) is coupled via a rotary mechanism of the central stalk subunits to proton translocation. Part of the complex F(0) domain and the peripheral stalk, which acts as a stator to hold the catalytic alpha/ATP1(3)beta/ATP2(3) subcomplex and subunit a/ATP6 static relative to the rotary elements. The polypeptide is ATP synthase subunit 4, mitochondrial (Yarrowia lipolytica (strain CLIB 122 / E 150) (Yeast)).